The primary structure comprises 242 residues: Probable 2-phosphosulfolactate phosphatase (242 aa).

It belongs to the ComB family. Mg(2+) is required as a cofactor.

It carries out the reaction (2R)-O-phospho-3-sulfolactate + H2O = (2R)-3-sulfolactate + phosphate. The sequence is that of Probable 2-phosphosulfolactate phosphatase from Prochlorococcus marinus (strain NATL2A).